We begin with the raw amino-acid sequence, 440 residues long: 3-phosphoshikimate 1-carboxyvinyltransferase (440 aa).

K26, S27, and R31 together coordinate 3-phosphoshikimate. K26 is a binding site for phosphoenolpyruvate. Positions 99 and 127 each coordinate phosphoenolpyruvate. 3-phosphoshikimate is bound by residues S172, Q174, D320, and K347. Q174 is a binding site for phosphoenolpyruvate. D320 acts as the Proton acceptor in catalysis. Residues R351 and R392 each contribute to the phosphoenolpyruvate site.

Belongs to the EPSP synthase family. In terms of assembly, monomer.

It localises to the cytoplasm. The enzyme catalyses 3-phosphoshikimate + phosphoenolpyruvate = 5-O-(1-carboxyvinyl)-3-phosphoshikimate + phosphate. Its pathway is metabolic intermediate biosynthesis; chorismate biosynthesis; chorismate from D-erythrose 4-phosphate and phosphoenolpyruvate: step 6/7. Catalyzes the transfer of the enolpyruvyl moiety of phosphoenolpyruvate (PEP) to the 5-hydroxyl of shikimate-3-phosphate (S3P) to produce enolpyruvyl shikimate-3-phosphate and inorganic phosphate. In Xanthomonas oryzae pv. oryzae (strain MAFF 311018), this protein is 3-phosphoshikimate 1-carboxyvinyltransferase.